The following is a 416-amino-acid chain: S-adenosylmethionine synthase (416 aa).

Residue H16 coordinates ATP. Residue D18 participates in Mg(2+) binding. Residue E44 coordinates K(+). Positions 57 and 100 each coordinate L-methionine. Residues 100–110 form a flexible loop region; it reads QSPDISQGVTA. Residues 175–177, 251–252, D260, 266–267, A283, and K287 contribute to the ATP site; these read DGK, KF, and RK. D260 is a binding site for L-methionine. K291 contributes to the L-methionine binding site.

The protein belongs to the AdoMet synthase family. As to quaternary structure, homotetramer; dimer of dimers. The cofactor is Mg(2+). It depends on K(+) as a cofactor.

The protein localises to the cytoplasm. The enzyme catalyses L-methionine + ATP + H2O = S-adenosyl-L-methionine + phosphate + diphosphate. It participates in amino-acid biosynthesis; S-adenosyl-L-methionine biosynthesis; S-adenosyl-L-methionine from L-methionine: step 1/1. Catalyzes the formation of S-adenosylmethionine (AdoMet) from methionine and ATP. The overall synthetic reaction is composed of two sequential steps, AdoMet formation and the subsequent tripolyphosphate hydrolysis which occurs prior to release of AdoMet from the enzyme. The sequence is that of S-adenosylmethionine synthase from Microcystis aeruginosa (strain NIES-843 / IAM M-2473).